The following is a 54-amino-acid chain: SFELTILHTNDVHARVEIINVGSEKSDDGRQVPVVQAYAFGIQLHNYSSQEIGK.

Positions 11 and 13 each coordinate Zn(2+). Residue Asn46 is glycosylated (N-linked (GlcNAc...) asparagine).

The protein belongs to the 5'-nucleotidase family. Zn(2+) is required as a cofactor. Venom 5'-nucleotidases (or a part thereof) may be released into the venom via exosome-like vesicles. They may be attached via a GPI anchor to the membrane of these vesicles. Soluble forms of 5'-nucleotidase might be released by cleavage of the ectodomain in the exosome-like vesicles or venom gland cells. As to expression, expressed by the venom gland.

It is found in the membrane. It carries out the reaction a ribonucleoside 5'-phosphate + H2O = a ribonucleoside + phosphate. Its function is as follows. Hydrolyzes nucleotides into nucleosides. Snake venom 5'-nucleotidases are widely distributed among venomous snake taxa, but there is a lack of information about their biological activities. They have been shown to inhibit platelet aggregation. This effect may be due to the liberation of inhibitory AMP or adenosine by its action on ADP released upon initiation of aggregation. Venom 5'-nucleotidases are also known to synergistically act in vivo with other toxins like ADPases, phospholipases, and disintegrins to exert a more pronounced anti-coagulant effect. The sequence is that of Snake venom 5'-nucleotidase from Gloydius blomhoffii blomhoffii (Japanese mamushi).